The primary structure comprises 313 residues: Lactamase-like protein ptaB (313 aa).

Positions 104, 106, 108, and 109 each coordinate Zn(2+). The active-site Proton donor/acceptor is the D108.

It belongs to the metallo-beta-lactamase superfamily. Requires Zn(2+) as cofactor.

It catalyses the reaction atrochrysone carboxyl-[ACP] + H2O = atrochrysone carboxylate + holo-[ACP] + H(+). It functions in the pathway secondary metabolite biosynthesis. Functionally, lactamase-like protein; part of the gene cluster that mediates the biosynthesis of pestheic acid, a diphenyl ether which is a biosynthetic precursor of the unique chloropupukeananes. The biosynthesis initiates from condensation of acetate and malonate units catalyzed by the non-reducing PKS ptaA. As the ptaA protein is TE/CLC domain-deficient, hydrolysis and Claisen cyclization of the polyketide could be catalyzed by ptaB containing a beta-lactamase domain. The ptaB protein might hydrolyze the thioester bond between the ACP of ptaA and the intermediate to release atrochrysone carboxylic acid, which is spontaneously dehydrated to form endocrocin anthrone. Endocrocin anthrone is then converted to endocrocin, catalyzed by the anthrone oxygenase ptaC. Spontaneous decarboxylation of endocrocin occurs to generate emodin. An O-methyltransferase (ptaH or ptaI) could methylate emodin to form physcion. PtaJ could then catalyze the oxidative cleavage of physcion, and rotation of the intermediate could then afford desmethylisosulochrin. PtaF, a putative NADH-dependent oxidoreductase, might also participate in the oxidative cleavage step. Desmethylisosulochrin is then transformed by another O-methyltransferase (ptaH or ptaI) to form isosulochrin. Chlorination of isosulochrin by ptaM in the cyclohexadienone B ring then produces chloroisosulochrin. PtaE is responsible for the oxidative coupling reactions of both benzophenones isosulochrin and chloroisosulochrin to RES-1214-1 and pestheic acid respectively, regardless of chlorination. The protein is Lactamase-like protein ptaB of Pestalotiopsis fici (strain W106-1 / CGMCC3.15140).